The following is a 237-amino-acid chain: RING finger protein vilya (237 aa).

The segment at 21–69 (CNSCCALFCDKKHTFFLLACHHVFCERCVKVSAGRTPSDAPIFECSTCR) adopts an RING-type zinc-finger fold. The segment at 172–237 (MHRMAQAYRS…IHPPNNSFDL (66 aa)) is disordered. Residues 180 to 195 (RSRSLTSQSSSSAQRS) are compositionally biased toward low complexity. A compositionally biased stretch (polar residues) spans 221 to 237 (RQQITSFIHPPNNSFDL).

May interact with itself and with narya and nenya through their RING-type zinc fingers. As to expression, expressed in nurse cell and pro-oocytes (at protein level).

Its subcellular location is the chromosome. In terms of biological role, required for the formation of DNA double-strand breaks during meiosis together with narya and nenya. In Drosophila melanogaster (Fruit fly), this protein is RING finger protein vilya.